We begin with the raw amino-acid sequence, 261 residues long: Auxin-responsive protein IAA10 (261 aa).

The segment at 1-43 (MNGLQEVCSSSGSVMIGLPAEEDENAAHSSEDSSCPDESVSET) is disordered. An EAR-like (transcriptional repression) motif is present at residues 45–49 (LDLAL). The disordered stretch occupies residues 62-90 (LSSSSSSLTRESGTKRSADSSPAAASNAT). The segment covering 80 to 89 (DSSPAAASNA) has biased composition (low complexity). The 103-residue stretch at 151–253 (SMLVKVTMDG…SVTRLRIMKT (103 aa)) folds into the PB1 domain.

This sequence belongs to the Aux/IAA family. Homodimers and heterodimers. As to expression, preferentially expressed in vegetative organs.

It is found in the nucleus. Aux/IAA proteins are short-lived transcriptional factors that function as repressors of early auxin response genes at low auxin concentrations. Repression is thought to result from the interaction with auxin response factors (ARFs), proteins that bind to the auxin-responsive promoter element (AuxRE). Formation of heterodimers with ARF proteins may alter their ability to modulate early auxin response genes expression. In Arabidopsis thaliana (Mouse-ear cress), this protein is Auxin-responsive protein IAA10 (IAA10).